Reading from the N-terminus, the 261-residue chain is Adenosylcobinamide-GDP ribazoletransferase (261 aa).

The next 5 helical transmembrane spans lie at 12 to 32 (NLFF…WVVI), 46 to 66 (LVGL…QLIL), 67 to 87 (PASI…GAFH), 120 to 140 (GALS…ELAL), and 199 to 219 (IFVL…TLWL).

It belongs to the CobS family. Mg(2+) serves as cofactor.

It localises to the cell inner membrane. The catalysed reaction is alpha-ribazole + adenosylcob(III)inamide-GDP = adenosylcob(III)alamin + GMP + H(+). It catalyses the reaction alpha-ribazole 5'-phosphate + adenosylcob(III)inamide-GDP = adenosylcob(III)alamin 5'-phosphate + GMP + H(+). Its pathway is cofactor biosynthesis; adenosylcobalamin biosynthesis; adenosylcobalamin from cob(II)yrinate a,c-diamide: step 7/7. Its function is as follows. Joins adenosylcobinamide-GDP and alpha-ribazole to generate adenosylcobalamin (Ado-cobalamin). Also synthesizes adenosylcobalamin 5'-phosphate from adenosylcobinamide-GDP and alpha-ribazole 5'-phosphate. The polypeptide is Adenosylcobinamide-GDP ribazoletransferase (Shewanella frigidimarina (strain NCIMB 400)).